We begin with the raw amino-acid sequence, 161 residues long: Disulfide bond formation protein B (161 aa).

Topologically, residues Met-1–Tyr-8 are cytoplasmic. Residues Phe-9–Tyr-25 form a helical membrane-spanning segment. Topologically, residues Leu-26–Phe-43 are periplasmic. A disulfide bridge links Cys-35 with Cys-38. A helical transmembrane segment spans residues Ala-44–Ala-58. At Gln-59–Ser-63 the chain is on the cytoplasmic side. The helical transmembrane segment at Leu-64 to Val-81 threads the bilayer. Residues Tyr-82–Ala-136 are Periplasmic-facing. Residues Cys-94 and Cys-122 are joined by a disulfide bond. A helical membrane pass occupies residues Trp-137–Arg-155. Topologically, residues Arg-156–Arg-161 are cytoplasmic.

Belongs to the DsbB family.

The protein resides in the cell inner membrane. Required for disulfide bond formation in some periplasmic proteins. Acts by oxidizing the DsbA protein. The chain is Disulfide bond formation protein B from Cupriavidus necator (strain ATCC 17699 / DSM 428 / KCTC 22496 / NCIMB 10442 / H16 / Stanier 337) (Ralstonia eutropha).